Consider the following 203-residue polypeptide: uncharacterized protein (203 aa).

The helical transmembrane segment at 180–200 (VYLLLFGIPLLILIFLIIFFI) threads the bilayer.

It localises to the virion. Its subcellular location is the host membrane. This is an uncharacterized protein from Acanthamoeba polyphaga (Amoeba).